A 686-amino-acid polypeptide reads, in one-letter code: Methionine--tRNA ligase (686 aa).

Residues 15 to 25 carry the 'HIGH' region motif; it reads PYTNGPIHIGH. Residues C147, C150, C160, and C163 each coordinate Zn(2+). A 'KMSKS' region motif is present at residues 336-340; the sequence is KLSTS. T339 is an ATP binding site. In terms of domain architecture, tRNA-binding spans 584–686; the sequence is DFAKMDLRVG…AGVGNGEGIN (103 aa).

It belongs to the class-I aminoacyl-tRNA synthetase family. MetG type 1 subfamily. As to quaternary structure, homodimer. Zn(2+) is required as a cofactor.

The protein localises to the cytoplasm. The enzyme catalyses tRNA(Met) + L-methionine + ATP = L-methionyl-tRNA(Met) + AMP + diphosphate. Functionally, is required not only for elongation of protein synthesis but also for the initiation of all mRNA translation through initiator tRNA(fMet) aminoacylation. The chain is Methionine--tRNA ligase from Flavobacterium psychrophilum (strain ATCC 49511 / DSM 21280 / CIP 103535 / JIP02/86).